Here is a 275-residue protein sequence, read N- to C-terminus: T cell receptor alpha chain MC.7.G5 (275 aa).

The signal sequence occupies residues 1–21; the sequence is MACPGFLWALVISTCLEFSMA. Residues 22 to 116 enclose the Ig-like V-type domain; that stretch reads QTVTQSQPEM…AAMYFCAYRS (95 aa). A t cell receptor alpha variable 38-2DV8 region spans residues 22-116; that stretch reads QTVTQSQPEM…AAMYFCAYRS (95 aa). Cysteine 43 and cysteine 112 are disulfide-bonded. The segment at 47–53 is CDR1; the sequence is TSESDYY. Residues 71-81 form a CDR2 region; the sequence is QEAYKQQNATE. Residue asparagine 78 is glycosylated (N-linked (GlcNAc...) asparagine). A CDR3 region spans residues 112 to 124; that stretch reads CAYRSAVNARLMF. The t cell receptor alpha joining 31 stretch occupies residues 119–134; the sequence is NARLMFGDGTQLVVKP. The t cell receptor alpha constant stretch occupies residues 136-275; that stretch reads IQNPDPAVYQ…LLMTLRLWSS (140 aa). Residues 154–242 form the Ig-like C1-type domain; that stretch reads KSVCLFTDFD…LVEKSFETDT (89 aa). Cysteine 157 and cysteine 207 are disulfide-bonded. N-linked (GlcNAc...) asparagine glycosylation is found at asparagine 167, asparagine 201, asparagine 212, and asparagine 248. The segment at 229-250 is connecting peptide; sequence CDVKLVEKSFETDTNLNFQNLS. Residues 251–273 form a helical membrane-spanning segment; it reads VIGFRILLLKVAGFNLLMTLRLW. Topologically, residues 274–275 are cytoplasmic; that stretch reads SS.

As to quaternary structure, disulfide-linked heterodimer with TRBV25-1*01J2S3*01C2*01 beta chain. The alpha-beta TR associates with the transmembrane signaling CD3 coreceptor proteins to form the TR-CD3 (TCR). The assembly of alpha-beta TR heterodimers with CD3 occurs in the endoplasmic reticulum where a single alpha-beta TR heterodimer associates with one CD3D-CD3E heterodimer, one CD3G-CD3E heterodimer and one CD247 homodimer forming a stable octameric structure. CD3D-CD3E and CD3G-CD3E heterodimers preferentially associate with TR alpha and TR beta chains (via TM domain), respectively. The association of the CD247 homodimer is the last step of TCR assembly in the endoplasmic reticulum and is required for transport to the cell surface. As to expression, expressed in MR1-restricted CD8-positive T cells.

It is found in the cell membrane. Functionally, the alpha chain of TRAV38-2DV8*01J31*01C*01/TRBV25-1*01J2S3*01C2*01 alpha-beta T cell receptor (TR) clonotype that displays pan-cancer cell recognition via the invariant MR1 molecule. On CD8-positive T cell clone MC.7.G5, likely recognizes tumor-specific or -associated metabolite(s) essential for cancer cell survival, triggering killing of many cancer cell types including lung, melanoma, leukemia, colon, breast, prostate, bone and ovarian cancer cells. Mediates cancer cell cytotoxicity in an HLA-independent manner. Has no reactivity to healthy cells, even stressed or infected by bacteria. Antigen recognition initiates TR-CD3 clustering on the cell surface and intracellular activation of LCK that phosphorylates the ITAM motifs of CD3G, CD3D, CD3E and CD247 enabling the recruitment of ZAP70. In turn, ZAP70 phosphorylates LAT, which recruits numerous signaling molecules to form the LAT signalosome. The LAT signalosome propagates signal branching to three major signaling pathways, the calcium, the mitogen-activated protein kinase (MAPK) kinase and the nuclear factor NF-kappa-B (NF-kB) pathways, leading to the mobilization of transcription factors that are critical for gene expression and essential for T cell differentiation into effector/memory T cells. The sequence is that of T cell receptor alpha chain MC.7.G5 from Homo sapiens (Human).